The chain runs to 61 residues: Adipokinetic prohormone type 2 (61 aa).

The signal sequence occupies residues M1–A22. Residue Q23 is modified to Pyrrolidone carboxylic acid. Tryptophan amide is present on W30.

Belongs to the AKH/HRTH/RPCH family. In terms of assembly, adipokinetic hormone precursor-related peptide (APRP) can form three type of disulfide-bond dimers: p1 (alpha-alpha), p2 (alpha-beta), and p3 (beta-beta).

The protein resides in the secreted. Its function is as follows. This hormone, released from cells in the corpora cardiaca, causes release of diglycerides from the fat body and stimulation of muscles to use these diglycerides as an energy source during energy-demanding processes. The chain is Adipokinetic prohormone type 2 from Schistocerca nitens (Vagrant locust).